The primary structure comprises 354 residues: MRFDLEPPSSVAAAHRIGVLLINLGTPDAPTPRAVRRYLAEFLSDPRVVEIPQAIWQVLLRTVILPLRGRASAKKYAAVWMPEGSPLRVYTERQTEGVRHLLAANDYQVQVDYAMRYGSPNIAQALAQFKRAGVERVLLMPMYPQYSASTTATAFDAAFAALTRMRNQPEVRTVRHYADHPAYIHALAEQVRHYWAQHGRPDFAAGDKLVLSFHGVPKRTLDLGDPYHDQCQQTGALLMAALGLSTLECRVTFQSRFGKAEWLQPYTAPTLRELGEAGVRRADVFCPGFTADCLETIEEIGMEVRDEFLAGGGQAFHRIPCLNGASAWIGALGEIVAENLQGWPAKAAQPETVS.

Fe cation contacts are provided by histidine 214 and glutamate 295.

The protein belongs to the ferrochelatase family.

It is found in the cytoplasm. It catalyses the reaction heme b + 2 H(+) = protoporphyrin IX + Fe(2+). It functions in the pathway porphyrin-containing compound metabolism; protoheme biosynthesis; protoheme from protoporphyrin-IX: step 1/1. Functionally, catalyzes the ferrous insertion into protoporphyrin IX. The sequence is that of Ferrochelatase from Burkholderia vietnamiensis (strain G4 / LMG 22486) (Burkholderia cepacia (strain R1808)).